A 76-amino-acid polypeptide reads, in one-letter code: Dermaseptin-H1 (76 aa).

Residues 1–22 (MDILKKSLFIVLFLGLVSLSIC) form the signal peptide. A propeptide spanning residues 23–45 (EEEKRENEDEEEQEDDEQSEEKR) is cleaved from the precursor. The disordered stretch occupies residues 25 to 44 (EKRENEDEEEQEDDEQSEEK). Residues 30–41 (EDEEEQEDDEQS) show a composition bias toward acidic residues. Glutamine 73 is modified (glutamine amide). Positions 75–76 (EQ) are excised as a propeptide.

Expressed by the skin glands.

The protein localises to the secreted. Has antimicrobial activity. This is Dermaseptin-H1 from Pithecopus hypochondrialis (Orange-legged leaf frog).